Reading from the N-terminus, the 188-residue chain is Ribosome-recycling factor (188 aa).

Belongs to the RRF family.

The protein resides in the cytoplasm. Functionally, responsible for the release of ribosomes from messenger RNA at the termination of protein biosynthesis. May increase the efficiency of translation by recycling ribosomes from one round of translation to another. This Akkermansia muciniphila (strain ATCC BAA-835 / DSM 22959 / JCM 33894 / BCRC 81048 / CCUG 64013 / CIP 107961 / Muc) protein is Ribosome-recycling factor.